A 555-amino-acid polypeptide reads, in one-letter code: Solute carrier family 22 member 2 (555 aa).

Over methionine 1–methionine 22 the chain is Cytoplasmic. Residues phenylalanine 23–leucine 43 form a helical membrane-spanning segment. Residues glycine 44–aspartate 150 lie on the Extracellular side of the membrane. An N-linked (GlcNAc...) asparagine glycan is attached at asparagine 72. The chain crosses the membrane as a helical span at residues leucine 151–alanine 171. Residues aspartate 172–lysine 177 are Cytoplasmic-facing. Residues leucine 178–proline 198 form a helical membrane-spanning segment. Residues threonine 199–leucine 208 lie on the Extracellular side of the membrane. The chain crosses the membrane as a helical span at residues isoleucine 209–valine 229. Residues glycine 230–glycine 238 lie on the Cytoplasmic side of the membrane. The helical transmembrane segment at isoleucine 239–leucine 259 threads the bilayer. Topologically, residues proline 260 to arginine 263 are extracellular. The chain crosses the membrane as a helical span at residues tryptophan 264 to proline 284. Positions proline 284–arginine 288 match the Proline-rich sequence motif. The Cytoplasmic segment spans residues glutamate 285–threonine 348. The helical transmembrane segment at methionine 349–methionine 369 threads the bilayer. Residues glycine 370–asparagine 375 are Extracellular-facing. Residues isoleucine 376–leucine 396 traverse the membrane as a helical segment. Residues threonine 397–alanine 414 lie on the Cytoplasmic side of the membrane. The chain crosses the membrane as a helical span at residues glycine 415–isoleucine 435. Residues serine 436–methionine 441 are Extracellular-facing. The chain crosses the membrane as a helical span at residues glycine 442–isoleucine 462. The Cytoplasmic portion of the chain corresponds to arginine 463–asparagine 464. The helical transmembrane segment at leucine 465–valine 485 threads the bilayer. Residues tyrosine 486 to glutamate 494 are Extracellular-facing. The helical transmembrane segment at leucine 495–proline 515 threads the bilayer. The Cytoplasmic segment spans residues glutamate 516 to asparagine 555.

The protein belongs to the major facilitator (TC 2.A.1) superfamily. Organic cation transporter (TC 2.A.1.19) family. Post-translationally, tyrosine phosphorylated by tyrosine-protein kinase YES1. Mainly expressed in kidney, in the cortex and medulla. Localized in testis, mostly to peritubular myoid cells and Leydig cells and also detected along the basal membrane of Sertoli cells. Expressed in brain, in neurons of the cerebral cortex and in various subcortical nuclei. In the brain, also detected in the dopaminergic regions of the substantia nigra. Expressed in tracheal and bronchial ciliated epithelium in the respiratory tract. Also detected in secretory phase endometrium, in scattered stromal cells. Expressed in spleen, placenta, small intestine and spinal cord. Weakly expressed in prostate, uterus and lung. In terms of tissue distribution, mainly expressed in kidney, bone marrow and testis. Expressed in colon, skeletal muscle, spinal cord, placenta and liver.

The protein resides in the basolateral cell membrane. It is found in the basal cell membrane. The protein localises to the apical cell membrane. The catalysed reaction is (R)-noradrenaline(out) = (R)-noradrenaline(in). The enzyme catalyses (R)-adrenaline(out) = (R)-adrenaline(in). It catalyses the reaction serotonin(out) = serotonin(in). It carries out the reaction dopamine(out) = dopamine(in). The catalysed reaction is histamine(out) = histamine(in). The enzyme catalyses thiamine(in) = thiamine(out). It catalyses the reaction creatinine(in) = creatinine(out). It carries out the reaction 1-methylnicotinamide(out) = 1-methylnicotinamide(in). The catalysed reaction is guanidine(out) = guanidine(in). The enzyme catalyses choline(out) = choline(in). It catalyses the reaction agmatine(out) = agmatine(in). It carries out the reaction putrescine(out) = putrescine(in). The catalysed reaction is spermidine(in) = spermidine(out). The enzyme catalyses tyramine(in) = tyramine(out). It catalyses the reaction L-histidyl-L-proline diketopiperazine(in) = L-histidyl-L-proline diketopiperazine(out). It carries out the reaction (R)-salsolinol(in) = (R)-salsolinol(out). The catalysed reaction is N-methyl-(R)-salsolinol(in) = N-methyl-(R)-salsolinol(out). The enzyme catalyses acetylcholine(in) = acetylcholine(out). It catalyses the reaction prostaglandin F2alpha(out) = prostaglandin F2alpha(in). It carries out the reaction prostaglandin E2(out) = prostaglandin E2(in). With respect to regulation, tyrosine phosphorylation of the transporter leads to activation of the transport activity. TEA uptake is activated by tyrosine phosphorylation. Inhibited by cGMP, most likely through a cGMP-binding protein that interacts with OCT2. Electrogenic voltage-dependent transporter that mediates the transport of a variety of organic cations such as endogenous bioactive amines, cationic drugs and xenobiotics. Functions as a Na(+)-independent, bidirectional uniporter. Cation cellular uptake or release is driven by the electrochemical potential, i.e. membrane potential and concentration gradient. However, may also engage electroneutral cation exchange when saturating concentrations of cation substrates are reached. Predominantly expressed at the basolateral membrane of hepatocytes and proximal tubules and involved in the uptake and disposition of cationic compounds by hepatic and renal clearance from the blood flow. Implicated in monoamine neurotransmitters uptake such as histamine, dopamine, adrenaline/epinephrine, noradrenaline/norepinephrine, serotonin and tyramine, thereby supporting a physiological role in the central nervous system by regulating interstitial concentrations of neurotransmitters. Also capable of transporting dopaminergic neuromodulators cyclo(his-pro), salsolinol and N-methyl-salsolinol, thereby involved in the maintenance of dopaminergic cell integrity in the central nervous system. Mediates the bidirectional transport of acetylcholine (ACh) at the apical membrane of ciliated cell in airway epithelium, thereby playing a role in luminal release of ACh from bronchial epithelium. Also transports guanidine and endogenous monoamines such as vitamin B1/thiamine, creatinine and N-1-methylnicotinamide (NMN). Mediates the uptake and efflux of quaternary ammonium compound choline. Mediates the bidirectional transport of polyamine agmatine and the uptake of polyamines putrescine and spermidine. Able to transport non-amine endogenous compounds such as prostaglandin E2 (PGE2) and prostaglandin F2-alpha (PGF2-alpha). Also involved in the uptake of xenobiotic 4-(4-(dimethylamino)styryl)-N-methylpyridinium (ASP). May contribute to regulate the transport of organic compounds in testis across the blood-testis-barrier. In terms of biological role, in contrast with isoform 1, not able to transport guanidine, creatinine, cimetidine and metformin. This chain is Solute carrier family 22 member 2, found in Homo sapiens (Human).